Here is a 286-residue protein sequence, read N- to C-terminus: Sulfate transport system permease protein CysT (286 aa).

7 helical membrane-spanning segments follow: residues 27 to 47, 74 to 94, 108 to 128, 146 to 166, 195 to 215, 224 to 244, and 257 to 276; these read WVVT…ALLV, FITA…VAWV, AMVD…LATL, IAFS…PFIV, FWRV…ALGF, SVVL…VLVF, and VIGA…INLL. Residues 70–273 form the ABC transmembrane type-1 domain; that stretch reads YNVTFITALA…SVSLILLLII (204 aa).

The protein belongs to the binding-protein-dependent transport system permease family. CysTW subfamily. As to quaternary structure, the complex is composed of two ATP-binding proteins (CysA), two transmembrane proteins (CysT and CysW) and a solute-binding protein (CysP).

The protein localises to the cell inner membrane. Functionally, part of the ABC transporter complex CysAWTP (TC 3.A.1.6.1) involved in sulfate/thiosulfate import. Probably responsible for the translocation of the substrate across the membrane. The protein is Sulfate transport system permease protein CysT (cysT) of Synechocystis sp. (strain ATCC 27184 / PCC 6803 / Kazusa).